A 260-amino-acid chain; its full sequence is Small ribosomal subunit protein uS2 (260 aa).

The span at 228–240 (RKETKAENAEEAM) shows a compositional bias: basic and acidic residues. The tract at residues 228 to 260 (RKETKAENAEEAMKQAAEAEAEAAAPAAEESAE) is disordered. Low complexity predominate over residues 241–260 (KQAAEAEAEAAAPAAEESAE).

Belongs to the universal ribosomal protein uS2 family.

This is Small ribosomal subunit protein uS2 from Oleidesulfovibrio alaskensis (strain ATCC BAA-1058 / DSM 17464 / G20) (Desulfovibrio alaskensis).